Reading from the N-terminus, the 513-residue chain is Activin receptor type-2A (513 aa).

The first 19 residues, 1–19, serve as a signal peptide directing secretion; it reads MGAAAKLAFAVFLISCSSG. Over 20–135 the chain is Extracellular; it reads AILGRSETQE…TSNPVTPKPP (116 aa). 5 disulfides stabilise this stretch: Cys30–Cys60, Cys50–Cys78, Cys85–Cys104, Cys91–Cys103, and Cys105–Cys110. Asn43 and Asn66 each carry an N-linked (GlcNAc...) asparagine glycan. A helical membrane pass occupies residues 136 to 161; that stretch reads YYNILLYSLVPLMLIAGIVICAFWVY. Over 162–513 the chain is Cytoplasmic; that stretch reads RHHKMAYPPV…VDFPPKESSL (352 aa). In terms of domain architecture, Protein kinase spans 192–485; the sequence is LQLLEVKARG…GERITQMQRL (294 aa). ATP contacts are provided by residues 198 to 206 and Lys219; that span reads KARGRFGCV. Asp322 (proton acceptor) is an active-site residue.

It belongs to the protein kinase superfamily. TKL Ser/Thr protein kinase family. TGFB receptor subfamily. As to quaternary structure, part of a complex consisting of MAGI2/ARIP1, ACVR2A, ACVR1B and SMAD3. Interacts with MAGI2/ARIP1. Interacts with type I receptor ACVR1. Interacts with BMP7. Interacts with TSC22D1/TSC-22. Interacts with activin A/INHBA. It depends on Mg(2+) as a cofactor. Mn(2+) is required as a cofactor. As to expression, brain, testis, intestine, liver and kidney.

The protein resides in the cell membrane. It catalyses the reaction L-threonyl-[receptor-protein] + ATP = O-phospho-L-threonyl-[receptor-protein] + ADP + H(+). The enzyme catalyses L-seryl-[receptor-protein] + ATP = O-phospho-L-seryl-[receptor-protein] + ADP + H(+). Functionally, on ligand binding, forms a receptor complex consisting of two type II and two type I transmembrane serine/threonine kinases. Type II receptors phosphorylate and activate type I receptors which autophosphorylate, then bind and activate SMAD transcriptional regulators. Receptor for activin A, activin B and inhibin A. Mediates induction of adipogenesis by GDF6. The protein is Activin receptor type-2A of Mus musculus (Mouse).